The primary structure comprises 476 residues: Cytosolic Fe-S cluster assembly factor narfl (476 aa).

8 residues coordinate [4Fe-4S] cluster: cysteine 24, cysteine 71, cysteine 74, cysteine 77, cysteine 190, cysteine 246, cysteine 395, and cysteine 399.

The protein belongs to the NARF family. As to quaternary structure, component of the CIA complex.

Functionally, component of the cytosolic iron-sulfur protein assembly (CIA) complex, a multiprotein complex that mediates the incorporation of iron-sulfur cluster into extramitochondrial Fe/S proteins. The sequence is that of Cytosolic Fe-S cluster assembly factor narfl (narfl) from Xenopus tropicalis (Western clawed frog).